The sequence spans 376 residues: Sulfate/thiosulfate import ATP-binding protein CysA (376 aa).

The 235-residue stretch at 3 to 237 (IRLDNISKHF…PNSRFVFDFF (235 aa)) folds into the ABC transporter domain. 35–42 (GPSGSGKT) contacts ATP.

This sequence belongs to the ABC transporter superfamily. Sulfate/tungstate importer (TC 3.A.1.6) family. As to quaternary structure, the complex is composed of two ATP-binding proteins (CysA), two transmembrane proteins (CysT and CysW) and a solute-binding protein (CysP).

The protein localises to the cell inner membrane. The enzyme catalyses sulfate(out) + ATP + H2O = sulfate(in) + ADP + phosphate + H(+). It catalyses the reaction thiosulfate(out) + ATP + H2O = thiosulfate(in) + ADP + phosphate + H(+). Part of the ABC transporter complex CysAWTP involved in sulfate/thiosulfate import. Responsible for energy coupling to the transport system. This Vibrio cholerae serotype O1 (strain ATCC 39315 / El Tor Inaba N16961) protein is Sulfate/thiosulfate import ATP-binding protein CysA.